A 488-amino-acid chain; its full sequence is Phenylalanine--tRNA ligase alpha subunit (488 aa).

Residues Thr-315, 354-356, Phe-394, and Phe-419 each bind L-phenylalanine; that span reads QLD.

Belongs to the class-II aminoacyl-tRNA synthetase family. Phe-tRNA synthetase alpha subunit type 2 subfamily. As to quaternary structure, tetramer of two alpha and two beta subunits. It depends on Mg(2+) as a cofactor.

Its subcellular location is the cytoplasm. It carries out the reaction tRNA(Phe) + L-phenylalanine + ATP = L-phenylalanyl-tRNA(Phe) + AMP + diphosphate + H(+). The protein is Phenylalanine--tRNA ligase alpha subunit of Pyrobaculum calidifontis (strain DSM 21063 / JCM 11548 / VA1).